Here is a 261-residue protein sequence, read N- to C-terminus: Cytochrome c oxidase subunit 3 (261 aa).

Topologically, residues 1 to 15 are mitochondrial matrix; that stretch reads MTHQTHAYHMVNPSP. Residues 16–34 form a helical membrane-spanning segment; that stretch reads WPLTGALSALLMTSGLIMW. Topologically, residues 35–40 are mitochondrial intermembrane; it reads FHFNST. A helical membrane pass occupies residues 41–66; sequence ILLMLGLTTNMLTMYQWWRDVIREST. At 67–72 the chain is on the mitochondrial matrix side; sequence FQGHHT. A helical membrane pass occupies residues 73-105; the sequence is PNVQKGLRYGMILFIISEVLFFTGFFWAFYHSS. At 106 to 128 the chain is on the mitochondrial intermembrane side; the sequence is LAPTPELGGCWPPTGIHPLNPLE. Residues 129-152 traverse the membrane as a helical segment; that stretch reads VPLLNTSVLLASGVSITWAHHSLM. Over 153–155 the chain is Mitochondrial matrix; that stretch reads EGN. The chain crosses the membrane as a helical span at residues 156–183; sequence RNHMLQALFITIALGVYFTLLQASEYYE. The Mitochondrial intermembrane portion of the chain corresponds to 184 to 190; that stretch reads APFTISD. The chain crosses the membrane as a helical span at residues 191–223; it reads GVYGSTFFVATGFHGLHVIIGSTFLIVCFFRQL. Residues 224–232 are Mitochondrial matrix-facing; that stretch reads KFHFTSNHH. A helical transmembrane segment spans residues 233–256; the sequence is FGFEAAAWYWHFVDVVWLFLYVSI. The Mitochondrial intermembrane portion of the chain corresponds to 257 to 261; it reads YWWGS.

This sequence belongs to the cytochrome c oxidase subunit 3 family. In terms of assembly, component of the cytochrome c oxidase (complex IV, CIV), a multisubunit enzyme composed of 14 subunits. The complex is composed of a catalytic core of 3 subunits MT-CO1, MT-CO2 and MT-CO3, encoded in the mitochondrial DNA, and 11 supernumerary subunits COX4I, COX5A, COX5B, COX6A, COX6B, COX6C, COX7A, COX7B, COX7C, COX8 and NDUFA4, which are encoded in the nuclear genome. The complex exists as a monomer or a dimer and forms supercomplexes (SCs) in the inner mitochondrial membrane with NADH-ubiquinone oxidoreductase (complex I, CI) and ubiquinol-cytochrome c oxidoreductase (cytochrome b-c1 complex, complex III, CIII), resulting in different assemblies (supercomplex SCI(1)III(2)IV(1) and megacomplex MCI(2)III(2)IV(2)).

Its subcellular location is the mitochondrion inner membrane. The catalysed reaction is 4 Fe(II)-[cytochrome c] + O2 + 8 H(+)(in) = 4 Fe(III)-[cytochrome c] + 2 H2O + 4 H(+)(out). Component of the cytochrome c oxidase, the last enzyme in the mitochondrial electron transport chain which drives oxidative phosphorylation. The respiratory chain contains 3 multisubunit complexes succinate dehydrogenase (complex II, CII), ubiquinol-cytochrome c oxidoreductase (cytochrome b-c1 complex, complex III, CIII) and cytochrome c oxidase (complex IV, CIV), that cooperate to transfer electrons derived from NADH and succinate to molecular oxygen, creating an electrochemical gradient over the inner membrane that drives transmembrane transport and the ATP synthase. Cytochrome c oxidase is the component of the respiratory chain that catalyzes the reduction of oxygen to water. Electrons originating from reduced cytochrome c in the intermembrane space (IMS) are transferred via the dinuclear copper A center (CU(A)) of subunit 2 and heme A of subunit 1 to the active site in subunit 1, a binuclear center (BNC) formed by heme A3 and copper B (CU(B)). The BNC reduces molecular oxygen to 2 water molecules using 4 electrons from cytochrome c in the IMS and 4 protons from the mitochondrial matrix. This Eudorcas thomsonii (Thomson's gazelle) protein is Cytochrome c oxidase subunit 3 (MT-CO3).